We begin with the raw amino-acid sequence, 123 residues long: Putative trans-acting factor (123 aa).

Disordered stretches follow at residues 1-38 and 100-123; these read MEAVIREGGSLPQVRSASRNQQRSGESTKGRKWEKQLR and VTHLGGRNSQGRSQGTRVWPLGRP. Over residues 13–25 the composition is skewed to polar residues; the sequence is QVRSASRNQQRSG. The segment covering 26 to 38 has biased composition (basic and acidic residues); it reads ESTKGRKWEKQLR. Polar residues predominate over residues 106–115; that stretch reads RNSQGRSQGT.

The sequence is that of Putative trans-acting factor (trans-acting factor) from Avian leukosis virus subgroup A (isolate RSA) (ALV-A RSA).